The following is a 355-amino-acid chain: Peptide chain release factor 1 (355 aa).

Gln-233 is modified (N5-methylglutamine).

Belongs to the prokaryotic/mitochondrial release factor family. Post-translationally, methylated by PrmC. Methylation increases the termination efficiency of RF1.

The protein resides in the cytoplasm. Its function is as follows. Peptide chain release factor 1 directs the termination of translation in response to the peptide chain termination codons UAG and UAA. The chain is Peptide chain release factor 1 from Bacillus anthracis.